A 127-amino-acid chain; its full sequence is Ribosome-binding factor A (127 aa).

The protein belongs to the RbfA family. As to quaternary structure, monomer. Binds 30S ribosomal subunits, but not 50S ribosomal subunits or 70S ribosomes.

The protein resides in the cytoplasm. One of several proteins that assist in the late maturation steps of the functional core of the 30S ribosomal subunit. Associates with free 30S ribosomal subunits (but not with 30S subunits that are part of 70S ribosomes or polysomes). Required for efficient processing of 16S rRNA. May interact with the 5'-terminal helix region of 16S rRNA. This chain is Ribosome-binding factor A, found in Geobacillus kaustophilus (strain HTA426).